A 127-amino-acid polypeptide reads, in one-letter code: S1-like domain-containing protein C146.08c (127 aa).

In terms of domain architecture, S1-like spans 10–86 (SFDPPARLEK…NKIDGTILYV (77 aa)). The segment at 107-127 (ESLNQNDSEESSSSEEEYDSD) is disordered. Residues 113 to 127 (DSEESSSSEEEYDSD) are compositionally biased toward acidic residues. A Phosphotyrosine modification is found at Tyr-124. At Ser-126 the chain carries Phosphoserine.

It belongs to the EIF1AD family.

The protein localises to the cytoplasm. It is found in the nucleus. The chain is S1-like domain-containing protein C146.08c from Schizosaccharomyces pombe (strain 972 / ATCC 24843) (Fission yeast).